We begin with the raw amino-acid sequence, 151 residues long: 6,7-dimethyl-8-ribityllumazine synthase (151 aa).

5-amino-6-(D-ribitylamino)uracil is bound by residues F15, 49–51 (AVE), and 73–75 (AVI). Residue 78–79 (ET) participates in (2S)-2-hydroxy-3-oxobutyl phosphate binding. H81 (proton donor) is an active-site residue. F106 lines the 5-amino-6-(D-ribitylamino)uracil pocket. Residue R120 participates in (2S)-2-hydroxy-3-oxobutyl phosphate binding.

The protein belongs to the DMRL synthase family. As to quaternary structure, forms an icosahedral capsid composed of 60 subunits, arranged as a dodecamer of pentamers.

It catalyses the reaction (2S)-2-hydroxy-3-oxobutyl phosphate + 5-amino-6-(D-ribitylamino)uracil = 6,7-dimethyl-8-(1-D-ribityl)lumazine + phosphate + 2 H2O + H(+). It participates in cofactor biosynthesis; riboflavin biosynthesis; riboflavin from 2-hydroxy-3-oxobutyl phosphate and 5-amino-6-(D-ribitylamino)uracil: step 1/2. Functionally, catalyzes the formation of 6,7-dimethyl-8-ribityllumazine by condensation of 5-amino-6-(D-ribitylamino)uracil with 3,4-dihydroxy-2-butanone 4-phosphate. This is the penultimate step in the biosynthesis of riboflavin. In Coxiella burnetii (strain Dugway 5J108-111), this protein is 6,7-dimethyl-8-ribityllumazine synthase.